The chain runs to 103 residues: UPF0145 protein BT9727_3206 (103 aa).

This sequence belongs to the UPF0145 family.

The protein is UPF0145 protein BT9727_3206 of Bacillus thuringiensis subsp. konkukian (strain 97-27).